We begin with the raw amino-acid sequence, 575 residues long: Proline--tRNA ligase (575 aa).

The protein belongs to the class-II aminoacyl-tRNA synthetase family. ProS type 1 subfamily. In terms of assembly, homodimer.

Its subcellular location is the cytoplasm. It carries out the reaction tRNA(Pro) + L-proline + ATP = L-prolyl-tRNA(Pro) + AMP + diphosphate. Functionally, catalyzes the attachment of proline to tRNA(Pro) in a two-step reaction: proline is first activated by ATP to form Pro-AMP and then transferred to the acceptor end of tRNA(Pro). As ProRS can inadvertently accommodate and process non-cognate amino acids such as alanine and cysteine, to avoid such errors it has two additional distinct editing activities against alanine. One activity is designated as 'pretransfer' editing and involves the tRNA(Pro)-independent hydrolysis of activated Ala-AMP. The other activity is designated 'posttransfer' editing and involves deacylation of mischarged Ala-tRNA(Pro). The misacylated Cys-tRNA(Pro) is not edited by ProRS. The polypeptide is Proline--tRNA ligase (Heliobacterium modesticaldum (strain ATCC 51547 / Ice1)).